The chain runs to 398 residues: Serpin-Z2B (398 aa).

Residues 343–367 are RCL; that stretch reads GTEAAATTIAKVVLRQAPPPSVLDF.

It belongs to the serpin family.

Inhibits chymotrypsin, cathepsin G and trypsin in vitro. This is Serpin-Z2B from Triticum aestivum (Wheat).